The sequence spans 270 residues: Glutamate racemase (270 aa).

Residues 14 to 15 (DS) and 46 to 47 (YG) each bind substrate. The active-site Proton donor/acceptor is cysteine 77. A substrate-binding site is contributed by 78–79 (NT). Cysteine 186 functions as the Proton donor/acceptor in the catalytic mechanism. 187–188 (TH) contributes to the substrate binding site.

The protein belongs to the aspartate/glutamate racemases family.

The catalysed reaction is L-glutamate = D-glutamate. The protein operates within cell wall biogenesis; peptidoglycan biosynthesis. Functionally, provides the (R)-glutamate required for cell wall biosynthesis. This Trichodesmium erythraeum (strain IMS101) protein is Glutamate racemase.